The sequence spans 207 residues: Nodulation protein S (207 aa).

This sequence belongs to the NodS family.

In terms of biological role, SAM-utilizing methyltransferase involved in nod factor synthesis. The protein is Nodulation protein S (nodS) of Azorhizobium caulinodans (strain ATCC 43989 / DSM 5975 / JCM 20966 / LMG 6465 / NBRC 14845 / NCIMB 13405 / ORS 571).